The primary structure comprises 307 residues: Low-salt glycan biosynthesis hexosyltransferase Agl10 (307 aa).

It belongs to the glycosyltransferase 2 family.

Its pathway is protein modification; protein glycosylation. The protein operates within cell surface structure biogenesis; S-layer biogenesis. Hexosyltransferase involved in N-glycan biosynthetic pathway that takes place under low-salt conditions (1.75 M instead of 3.4 M). Participates in the formation of the tetrasaccharide present at 'Asn-532' of S-layer glycoprotein Csg, consisting of a sulfated hexose, 2 hexoses and rhamnose. Involved in the addition of final rhamnose (sugar 4) of the tetrasaccharide on the dolichol phosphate carrier. This chain is Low-salt glycan biosynthesis hexosyltransferase Agl10 (agl10), found in Haloferax volcanii (strain ATCC 29605 / DSM 3757 / JCM 8879 / NBRC 14742 / NCIMB 2012 / VKM B-1768 / DS2) (Halobacterium volcanii).